The primary structure comprises 363 residues: Peptide chain release factor 2 (363 aa).

Gln251 carries the N5-methylglutamine modification.

This sequence belongs to the prokaryotic/mitochondrial release factor family. Methylated by PrmC. Methylation increases the termination efficiency of RF2.

The protein localises to the cytoplasm. Functionally, peptide chain release factor 2 directs the termination of translation in response to the peptide chain termination codons UGA and UAA. This chain is Peptide chain release factor 2 (prfB), found in Helicobacter pylori (strain J99 / ATCC 700824) (Campylobacter pylori J99).